The chain runs to 581 residues: Chaotic nuclear migration protein 67 (581 aa).

5 positions are modified to phosphoserine: S17, S20, S72, S85, and S89. Residues 86–150 are disordered; the sequence is YQESPGLQER…PTDEHTSPDI (65 aa). Over residues 94–114 the composition is skewed to basic and acidic residues; sequence ERPKNEKDKSPIGTDVHKKDV. At S151 the chain carries Phosphoserine. 3 coiled-coil regions span residues 179-252, 306-363, and 373-451; these read LGYQ…DTIQ, FLCA…LSKQ, and KLTI…NTSE.

Interacts directly with ADY3 and YOR129C. Interacts with ADY4. Probable component of a SPB complex composed of ADY3, SSP1, DON1, MPC54, SPO21/MPC70, NUD1 and CNM67. Post-translationally, phosphorylated in its N-terminal part.

It localises to the cytoplasm. Its subcellular location is the cytoskeleton. The protein resides in the microtubule organizing center. The protein localises to the spindle pole body. Functionally, involved in the pathway that organizes the shaping and sizing of the prospore membrane (PSM) during sporulation. Required for the proper formation of the spindle pole body (SPB) outer plaque. May connect the outer plaque to the central plaque embedded in the nuclear envelope. This Saccharomyces cerevisiae (strain ATCC 204508 / S288c) (Baker's yeast) protein is Chaotic nuclear migration protein 67 (CNM67).